Reading from the N-terminus, the 203-residue chain is Recombination protein RecR (203 aa).

The segment at 58–73 (CDYCGNLDVVSICNIC) adopts a C4-type zinc-finger fold. Residues 81–177 (SIIAIVESVA…KISKLASGIP (97 aa)) enclose the Toprim domain.

It belongs to the RecR family.

In terms of biological role, may play a role in DNA repair. It seems to be involved in an RecBC-independent recombinational process of DNA repair. It may act with RecF and RecO. The sequence is that of Recombination protein RecR from Orientia tsutsugamushi (strain Boryong) (Rickettsia tsutsugamushi).